The primary structure comprises 584 residues: MGLSRKKIFTWPLLLTGMAVVSTTFSSCSVFNFFSNLPTTTDNNNYGPTVQNLSAFLPTSDYKKIYDLSFSLEFNNSGGYNPSRLMSNNEGVTAENVNRPYRVFGTGWLFDWQAQPVDENDQNAKWTGYFATNLHVAEALLNPLDNKNYRPAWYKNELPLPGVDQTLYFNLGKWDENLAVQNKHNPKSLTYLPLSNLPKTVYTATSFYKESPKWITPIEADNPGIREYIDFAVLSITLDLSWTMRNGEKVHRYNDEYQLYNRWIMPAMNVAKALWDNKGVLNQPATPPNKKEEDDQLTDQLPYHGFFDRSNYTNPNVSLNNFSVYLGGYPYYANWPTTPQYTKFSVPSLSRRQIPITSDSRGSPGWTINALNPTELDGQKIASSTSLSSTGGIRAGIYNADIARNFQLVYRNVKYKQYGYGYIIQNSNLSAGSSGSLALTSNNQALGIYFGTVSVDAKKEATFGLVASLFNPNKIQVNVVTGNNVFETDTIQPYDLIYGNDLMTDDYGSYIRSLQTLNLSSRLLTKIKDNLPKKEGSTNQANQQTNQTNRSTDATKKDSSSDETNKNPLAELLSDIFKNLPNWN.

The signal sequence occupies residues Met-1–Ser-27. The N-palmitoyl cysteine moiety is linked to residue Cys-28. Cys-28 is lipidated: S-diacylglycerol cysteine. Residues Asn-530 to Ala-570 form a disordered region. A compositionally biased stretch (low complexity) spans Thr-538–Thr-552. Positions Asp-553–Asn-565 are enriched in basic and acidic residues.

Belongs to the MG067/MG068/MG395 family.

It localises to the cell membrane. This is an uncharacterized protein from Mycoplasmoides gallisepticum (strain R(low / passage 15 / clone 2)) (Mycoplasma gallisepticum).